Reading from the N-terminus, the 663-residue chain is Alcohol oxidase 1 (663 aa).

Residue 8-38 coordinates FAD; sequence DILVLGGGSSGSCIAGRLANLDHSLKVGLIE. His567 (proton acceptor) is an active-site residue. The Microbody targeting signal motif lies at 661–663; that stretch reads ARF.

It belongs to the GMC oxidoreductase family. Homooctamer. FAD serves as cofactor.

Its subcellular location is the peroxisome matrix. The enzyme catalyses a primary alcohol + O2 = an aldehyde + H2O2. Its pathway is energy metabolism; methane degradation. Functionally, major isoform of alcohol oxidase, which catalyzes the oxidation of methanol to formaldehyde and hydrogen peroxide, the first step in the methanol utilization pathway of methylotrophic yeasts. In Komagataella phaffii (strain ATCC 76273 / CBS 7435 / CECT 11047 / NRRL Y-11430 / Wegner 21-1) (Yeast), this protein is Alcohol oxidase 1 (AOX1).